Consider the following 105-residue polypeptide: Urease subunit beta (105 aa).

Belongs to the urease beta subunit family. As to quaternary structure, heterotrimer of UreA (gamma), UreB (beta) and UreC (alpha) subunits. Three heterotrimers associate to form the active enzyme.

The protein localises to the cytoplasm. The catalysed reaction is urea + 2 H2O + H(+) = hydrogencarbonate + 2 NH4(+). It participates in nitrogen metabolism; urea degradation; CO(2) and NH(3) from urea (urease route): step 1/1. This is Urease subunit beta from Pseudomonas entomophila (strain L48).